A 906-amino-acid polypeptide reads, in one-letter code: Putative disease resistance protein At1g59780 (906 aa).

A coiled-coil region spans residues 20–59 (KLLSQEYERFQGVEEQITELRDDLKMLMAFLSDADAKKQT). Residues 138 to 452 (SHAQLERKRE…AEGITYPGNY (315 aa)) form the NB-ARC domain. Residue 187-194 (GLGGLGKT) participates in ATP binding. LRR repeat units lie at residues 572-597 (LPLL…IGKL), 599-619 (HLKY…SLRN), 620-644 (LKSL…VFKE), and 825-850 (MPLL…RFIS).

Belongs to the disease resistance NB-LRR family.

In terms of biological role, potential disease resistance protein. The chain is Putative disease resistance protein At1g59780 from Arabidopsis thaliana (Mouse-ear cress).